A 547-amino-acid chain; its full sequence is MAMASAACSCTDGTWWVYALPALLGSDTLCAHPALLAGLIFLATVSVALLAWATSPGGPAWTNGRGASASLLSWDPVVCPCSAASSRCPGAAAPRPRRDGPRRRPRAKELMAFSVGDTPAVVSSCPATAREVLAHPSFADRPVKRSARELMFARAIGFAPNGEYWRRLRRVASTHLFSPRRVASHEPGRQGDAEAMLRSIAAEQSASGAVALRPHLQAAALNNIMGSVFGTRYDVTSGAGAAEAEHLKSMVREGFELLGAFNWSDHLPWLAHLYDPSNVTRRCAALVPRVQTFVRGVIDEHRRRRQNSAALNDNADFVDVLLSLEGDEKLGDDDMVAILWEMVFRGTDTTALLTEWCMAELVRHPAVQARVRAEVDAAVGAGGCPTDADVARMPYLQAVVKETLRAHPPGPLLSWARLATADVPLCNGMVVPAGTTAMVNMWAITHDAAVWADPDAFAPERFLPSEGGADVDVRGVDLRLAPFGAGRRVCPGKNLGLTTVGLWVARLVHAFQWALPDGAAAVCLDEVLKLSLEMKTPLVAAAIPRTA.

The segment covering 84-94 (ASSRCPGAAAP) has biased composition (low complexity). Residues 84 to 104 (ASSRCPGAAAPRPRRDGPRRR) are disordered. Residue Cys-490 participates in heme binding.

It belongs to the cytochrome P450 family. It depends on heme as a cofactor. In terms of tissue distribution, shoot apex.

This is Cytochrome P450 78A1 (CYP78A1) from Zea mays (Maize).